Here is a 389-residue protein sequence, read N- to C-terminus: Succinate--CoA ligase [ADP-forming] subunit beta (389 aa).

The ATP-grasp domain occupies 9–244 (KEIFRSMGVA…LDEEDPKEIE (236 aa)). Residues Lys46, 53-55 (GRG), Glu99, Cys102, and Glu107 contribute to the ATP site. Positions 199 and 213 each coordinate Mg(2+). Substrate is bound by residues Asn264 and 321–323 (GIM).

Belongs to the succinate/malate CoA ligase beta subunit family. As to quaternary structure, heterotetramer of two alpha and two beta subunits. It depends on Mg(2+) as a cofactor.

The enzyme catalyses succinate + ATP + CoA = succinyl-CoA + ADP + phosphate. It carries out the reaction GTP + succinate + CoA = succinyl-CoA + GDP + phosphate. It participates in carbohydrate metabolism; tricarboxylic acid cycle; succinate from succinyl-CoA (ligase route): step 1/1. Succinyl-CoA synthetase functions in the citric acid cycle (TCA), coupling the hydrolysis of succinyl-CoA to the synthesis of either ATP or GTP and thus represents the only step of substrate-level phosphorylation in the TCA. The beta subunit provides nucleotide specificity of the enzyme and binds the substrate succinate, while the binding sites for coenzyme A and phosphate are found in the alpha subunit. The sequence is that of Succinate--CoA ligase [ADP-forming] subunit beta from Macrococcus caseolyticus (strain JCSC5402) (Macrococcoides caseolyticum).